The primary structure comprises 244 residues: NAD(P)H-hydrate epimerase (244 aa).

Positions 35–240 (IREIDSLAME…SIGVPLELLR (206 aa)) constitute a YjeF N-terminal domain. 82-86 (NNGGD) is a (6S)-NADPHX binding site. Positions 83 and 150 each coordinate K(+). (6S)-NADPHX-binding positions include 154 to 160 (GTGAKPP), tyrosine 165, and aspartate 183. Threonine 186 is a binding site for K(+).

Belongs to the NnrE/AIBP family. K(+) is required as a cofactor.

The enzyme catalyses (6R)-NADHX = (6S)-NADHX. The catalysed reaction is (6R)-NADPHX = (6S)-NADPHX. In terms of biological role, catalyzes the epimerization of the S- and R-forms of NAD(P)HX, a damaged form of NAD(P)H that is a result of enzymatic or heat-dependent hydration. This is a prerequisite for the S-specific NAD(P)H-hydrate dehydratase to allow the repair of both epimers of NAD(P)HX. The sequence is that of NAD(P)H-hydrate epimerase from Rhodopirellula baltica (strain DSM 10527 / NCIMB 13988 / SH1).